Reading from the N-terminus, the 392-residue chain is Hercynylcysteine sulfoxide lyase (392 aa).

K219 is modified (N6-(pyridoxal phosphate)lysine).

This sequence belongs to the class-V pyridoxal-phosphate-dependent aminotransferase family. EgtE subfamily. Requires pyridoxal 5'-phosphate as cofactor.

Its subcellular location is the cytoplasm. It localises to the nucleus. It catalyses the reaction S-(hercyn-2-yl)-L-cysteine S-oxide + AH2 + H(+) = ergothioneine + pyruvate + A + NH4(+). The protein operates within amino-acid biosynthesis; ergothioneine biosynthesis. In terms of biological role, catalyzes the conversion of hercynylcysteine sulfoxide to ergothioneine by cleaving the cysteine residue at the sulfur atom, the last step in the biosynthesis pathway of ergothioneine. In Schizosaccharomyces pombe (strain 972 / ATCC 24843) (Fission yeast), this protein is Hercynylcysteine sulfoxide lyase.